Consider the following 232-residue polypeptide: Lipoarabinomannan carrier protein LprG (232 aa).

The first 21 residues, 1-21 (MQTRLTAILAAFLTAVALLAG), serve as a signal peptide directing secretion. A lipid anchor (N-palmitoyl cysteine) is attached at Cys22. Cys22 carries the S-diacylglycerol cysteine lipid modification.

Belongs to the LppX/LprAFG lipoprotein family. Modified by Lgt on Cys-22 with an S-linked diacylglyceral, signal peptide is removed by LspA, Cys-22 is further modifed with a fatty acid on its amino group by Lnt yielding a triacylated protein.

The protein localises to the cell inner membrane. Its function is as follows. Helps membrane protein MHAS_02168/C731_2106 (P55) transport triacylglycerides (TAG) across the inner cell membrane into the periplasm and probably ultimately to the outer membrane. Binds TAG in its hydrophobic cavity and transfers it between lipid bilayers. TAG probably regulates lipid metabolism and growth regulation and plays a structural role in the outer membrane. Also binds mannosides, lipoarabinomannan and lipomannan and various glycolipids in the same cavity. The lprG-MHAS_02167/C731_2107 operon complements the vancomycin sensitivity of an M.smegmatis knockout of the same operon. In Mycolicibacterium hassiacum (strain DSM 44199 / CIP 105218 / JCM 12690 / 3849) (Mycobacterium hassiacum), this protein is Lipoarabinomannan carrier protein LprG.